We begin with the raw amino-acid sequence, 325 residues long: Probable exonuclease subunit 1 (325 aa).

In terms of assembly, could consist of two subunits: D13 and D12.

Possible exonuclease involved in phage DNA recombination, replication, and repair. The chain is Probable exonuclease subunit 1 (D12) from Escherichia coli (Enterobacteria phage T5).